A 261-amino-acid chain; its full sequence is 6-carboxyhexanoate--CoA ligase (261 aa).

Belongs to the BioW family. As to quaternary structure, homodimer. Mg(2+) is required as a cofactor.

It catalyses the reaction heptanedioate + ATP + CoA = 6-carboxyhexanoyl-CoA + AMP + diphosphate. It participates in metabolic intermediate metabolism; pimeloyl-CoA biosynthesis; pimeloyl-CoA from pimelate: step 1/1. Its function is as follows. Catalyzes the transformation of pimelate into pimeloyl-CoA with concomitant hydrolysis of ATP to AMP. The chain is 6-carboxyhexanoate--CoA ligase from Bacillus licheniformis (strain ATCC 14580 / DSM 13 / JCM 2505 / CCUG 7422 / NBRC 12200 / NCIMB 9375 / NCTC 10341 / NRRL NRS-1264 / Gibson 46).